Here is a 206-residue protein sequence, read N- to C-terminus: Ras-related protein Rab7 (206 aa).

GTP is bound by residues 15-22 (GDTGVGKT), 63-67 (DTAGQ), and 125-128 (NKID). 2 S-geranylgeranyl cysteine lipidation sites follow: C204 and C206. Residue C206 is modified to Cysteine methyl ester.

This sequence belongs to the small GTPase superfamily. Rab family.

Its subcellular location is the cell membrane. Functionally, protein transport. Probably involved in vesicular traffic. The sequence is that of Ras-related protein Rab7 from Vigna aconitifolia (Moth bean).